The primary structure comprises 515 residues: Fatty acyl-CoA reductase 1 (515 aa).

Over 1–465 (MVSIPEYYEG…ARKHLNKLRN (465 aa)) the chain is Cytoplasmic. Residues 466–483 (IRYGFNTILVILIWRIFI) traverse the membrane as a helical segment. Topologically, residues 484–515 (ARSQMARNIWYFVVSLCYKFLSYFRASSTMRY) are peroxisomal.

It belongs to the fatty acyl-CoA reductase family.

The protein localises to the peroxisome membrane. It carries out the reaction a long-chain fatty acyl-CoA + 2 NADPH + 2 H(+) = a long-chain primary fatty alcohol + 2 NADP(+) + CoA. The enzyme catalyses hexadecanoyl-CoA + 2 NADPH + 2 H(+) = hexadecan-1-ol + 2 NADP(+) + CoA. The catalysed reaction is octadecanoyl-CoA + 2 NADPH + 2 H(+) = octadecan-1-ol + 2 NADP(+) + CoA. It catalyses the reaction (9Z)-octadecenoyl-CoA + 2 NADPH + 2 H(+) = (9Z)-octadecen-1-ol + 2 NADP(+) + CoA. It carries out the reaction (9Z,12Z)-octadecadienoyl-CoA + 2 NADPH + 2 H(+) = (9Z,12Z)-octadecadien-1-ol + 2 NADP(+) + CoA. The enzyme catalyses eicosanoyl-CoA + 2 NADPH + 2 H(+) = eicosan-1-ol + 2 NADP(+) + CoA. The catalysed reaction is 16-methylheptadecanoyl-CoA + 2 NADPH + 2 H(+) = 16-methylheptadecan-1-ol + 2 NADP(+) + CoA. It catalyses the reaction 18-methylnonadecanoyl-CoA + 2 NADPH + 2 H(+) = 18-methylnonadecan-1-ol + 2 NADP(+) + CoA. Its function is as follows. Catalyzes the reduction of saturated and unsaturated C16 or C18 fatty acyl-CoA to fatty alcohols. It plays an essential role in the production of ether lipids/plasmalogens which synthesis requires fatty alcohols. In parallel, it is also required for wax monoesters production since fatty alcohols also constitute a substrate for their synthesis. The polypeptide is Fatty acyl-CoA reductase 1 (Gallus gallus (Chicken)).